A 447-amino-acid chain; its full sequence is Dihydroorotase (447 aa).

Zn(2+)-binding residues include His81 and His83. Residues 83–85 and Asn115 contribute to the substrate site; that span reads HFR. Residues Asp171, His198, and His252 each contribute to the Zn(2+) site. Residue Asn298 participates in substrate binding. Asp325 is a binding site for Zn(2+). Asp325 is an active-site residue. Residues His329 and 343 to 344 each bind substrate; that span reads FG.

The protein belongs to the metallo-dependent hydrolases superfamily. DHOase family. Class I DHOase subfamily. Zn(2+) is required as a cofactor.

It catalyses the reaction (S)-dihydroorotate + H2O = N-carbamoyl-L-aspartate + H(+). It functions in the pathway pyrimidine metabolism; UMP biosynthesis via de novo pathway; (S)-dihydroorotate from bicarbonate: step 3/3. In terms of biological role, catalyzes the reversible cyclization of carbamoyl aspartate to dihydroorotate. The protein is Dihydroorotase of Ehrlichia canis (strain Jake).